The sequence spans 253 residues: Matrix protein (253 aa).

Positions 1–26 (MLSRIKQGIKTKRSSSSSSSRSKTGD) are disordered. A PTAP/PSAP motif motif is present at residues 55-58 (PTAP).

As to quaternary structure, homomultimer. Interacts with viral nucleocapsid. Interacts with host TSG101.

It is found in the virion membrane. It localises to the host endomembrane system. Its subcellular location is the host nucleus membrane. In terms of biological role, plays a major role in assembly and budding of virion, by recruiting cellular partners of the ESCRT complexes that play a key role in releasing the budding particle from the host membrane. Condensates the ribonucleocapsid core during virus assembly. The chain is Matrix protein (M) from Bos taurus (Bovine).